A 129-amino-acid polypeptide reads, in one-letter code: Phosphomevalonate dehydratase small subunit (129 aa).

Catalysis depends on Ser61, which acts as the Proton acceptor.

The protein belongs to the AcnX type II small subunit family. As to quaternary structure, heterodimer composed of a large subunit (PMDh-L) and a small subunit (PMDh-S).

The enzyme catalyses (R)-5-phosphomevalonate = (2E)-3-methyl-5-phosphooxypent-2-enoate + H2O. Its pathway is isoprenoid biosynthesis; isopentenyl diphosphate biosynthesis via mevalonate pathway. Component of a hydro-lyase that catalyzes the dehydration of mevalonate 5-phosphate (MVA5P) to form trans-anhydromevalonate 5-phosphate (tAHMP). Involved in the archaeal mevalonate (MVA) pathway, which provides fundamental precursors for isoprenoid biosynthesis, such as isopentenyl diphosphate (IPP) and dimethylallyl diphosphate (DMAPP). This chain is Phosphomevalonate dehydratase small subunit, found in Methanocaldococcus jannaschii (strain ATCC 43067 / DSM 2661 / JAL-1 / JCM 10045 / NBRC 100440) (Methanococcus jannaschii).